The chain runs to 399 residues: Phosphoglycerate kinase (399 aa).

Substrate-binding positions include 22 to 24, arginine 38, 61 to 64, arginine 119, and arginine 152; these read DFN and HLGR. ATP is bound by residues lysine 205, glycine 296, glutamate 327, and 353–356; that span reads GGDT.

Belongs to the phosphoglycerate kinase family. In terms of assembly, monomer.

Its subcellular location is the cytoplasm. It catalyses the reaction (2R)-3-phosphoglycerate + ATP = (2R)-3-phospho-glyceroyl phosphate + ADP. It functions in the pathway carbohydrate degradation; glycolysis; pyruvate from D-glyceraldehyde 3-phosphate: step 2/5. The sequence is that of Phosphoglycerate kinase from Nitratiruptor sp. (strain SB155-2).